We begin with the raw amino-acid sequence, 311 residues long: Glutaminase (311 aa).

Positions 69, 120, 164, 171, 195, 247, and 265 each coordinate substrate.

The protein belongs to the glutaminase family. As to quaternary structure, homotetramer.

It catalyses the reaction L-glutamine + H2O = L-glutamate + NH4(+). In Colwellia psychrerythraea (strain 34H / ATCC BAA-681) (Vibrio psychroerythus), this protein is Glutaminase.